The sequence spans 486 residues: Histamine H1 receptor (486 aa).

Topologically, residues 1–29 (MSFANTSSTFEDKMCEGNRTAMASPQLLP) are extracellular. N5 and N18 each carry an N-linked (GlcNAc...) asparagine glycan. A helical membrane pass occupies residues 30–50 (LVVVLSSISLVTVGLNLLVLY). The Cytoplasmic segment spans residues 51–64 (AVHSERKLHTVGNL). A helical transmembrane segment spans residues 65–89 (YIVSLSVADLIVGAVVMPMNILYLI). Residues 90 to 97 (MTKWSLGR) are Extracellular-facing. The chain crosses the membrane as a helical span at residues 98-123 (PLCLFWLSMDYVASTASIFSVFILCI). A disulfide bridge links C100 with C180. Residues D107 and T112 each coordinate histamine. Residues 107–112 (DYVAST) form an important for agonist binding region. Topologically, residues 124 to 144 (DRYRSVQQPLRYLRYRTKTRA) are cytoplasmic. Phosphothreonine is present on residues T140 and T142. The helical transmembrane segment at 145–164 (SATILGAWFFSFLWVIPILG) threads the bilayer. The Extracellular portion of the chain corresponds to 165-188 (WHHFMPPAPELREDKCETDFYNVT). Residues 189-211 (WFKIMTAIINFYLPTLLMLWFYV) form a helical membrane-spanning segment. Position 198 (N198) interacts with histamine. Residues 212 to 415 (KIYKAVRRHC…LNRERKAAKQ (204 aa)) lie on the Cytoplasmic side of the membrane. At S230 the chain carries Phosphoserine. The span at 241–253 (SDDTKEGAKKPGR) shows a compositional bias: basic and acidic residues. Disordered regions lie at residues 241–295 (SDDT…GERE) and 310–379 (VAEG…RSGS). 2 positions are modified to phosphoserine: S342 and S345. Over residues 347–365 (DQTLVDQQSFSRTTDSDTS) the composition is skewed to polar residues. Phosphoserine occurs at positions 379, 381, 395, and 397. A helical membrane pass occupies residues 416–439 (LGFIMAAFILCWIPYFIFFMVIAF). The tract at residues 423-427 (FILCW) is important for agonist binding. Y430 lines the histamine pocket. The cysteines at positions 440 and 443 are disulfide-linked. Over 440–445 (CKSCCS) the chain is Extracellular. Residues 446-468 (EPMHMFTIWLGYINSTLNPLIYP) form a helical membrane-spanning segment. The Cytoplasmic segment spans residues 469–486 (LCNENFKKTFKKILHIRS).

It belongs to the G-protein coupled receptor 1 family. In terms of processing, phosphorylation at sites in the second and third cytoplasmic loops independently contribute to agonist-induced receptor down-regulation.

It is found in the cell membrane. G-protein-coupled receptor for histamine, a biogenic amine that functions as an immune modulator and a neurotransmitter. Through the H1 receptor, histamine mediates the contraction of smooth muscles and increases capillary permeability due to contraction of terminal venules. Also mediates neurotransmission in the central nervous system and thereby regulates circadian rhythms, emotional and locomotor activities as well as cognitive functions. In Rattus norvegicus (Rat), this protein is Histamine H1 receptor.